Here is a 149-residue protein sequence, read N- to C-terminus: MEIVAENRKARFDYFVLQEYDAGMVLVGSEVKSLRQRKVNMGDAYVLEKDMELWIHNLHISEYNRSDRKNHKPLRVRKLLLRKREIHKIAGNIKVSGLAVVPLMIFFNNKGIAKIKIAIVKGKKLYDKREAIKTRDWQREKSRISRREV.

It belongs to the SmpB family.

Its subcellular location is the cytoplasm. Required for rescue of stalled ribosomes mediated by trans-translation. Binds to transfer-messenger RNA (tmRNA), required for stable association of tmRNA with ribosomes. tmRNA and SmpB together mimic tRNA shape, replacing the anticodon stem-loop with SmpB. tmRNA is encoded by the ssrA gene; the 2 termini fold to resemble tRNA(Ala) and it encodes a 'tag peptide', a short internal open reading frame. During trans-translation Ala-aminoacylated tmRNA acts like a tRNA, entering the A-site of stalled ribosomes, displacing the stalled mRNA. The ribosome then switches to translate the ORF on the tmRNA; the nascent peptide is terminated with the 'tag peptide' encoded by the tmRNA and targeted for degradation. The ribosome is freed to recommence translation, which seems to be the essential function of trans-translation. This is SsrA-binding protein from Anaplasma marginale (strain Florida).